The chain runs to 145 residues: 3-dehydroquinate dehydratase (145 aa).

The active-site Proton acceptor is Tyr-24. Substrate-binding residues include Asn-76, His-82, and Asp-89. His-102 functions as the Proton donor in the catalytic mechanism. Substrate contacts are provided by residues 103–104 (VS) and Arg-113.

The protein belongs to the type-II 3-dehydroquinase family. Homododecamer.

The enzyme catalyses 3-dehydroquinate = 3-dehydroshikimate + H2O. It participates in metabolic intermediate biosynthesis; chorismate biosynthesis; chorismate from D-erythrose 4-phosphate and phosphoenolpyruvate: step 3/7. Its function is as follows. Catalyzes a trans-dehydration via an enolate intermediate. The chain is 3-dehydroquinate dehydratase from Janthinobacterium sp. (strain Marseille) (Minibacterium massiliensis).